We begin with the raw amino-acid sequence, 348 residues long: Methylthioribose-1-phosphate isomerase (348 aa).

Residues 48-50 (RGA), Arg90, and Gln195 each bind substrate. Residue Asp236 is the Proton donor of the active site. A substrate-binding site is contributed by 246 to 247 (NK).

Belongs to the eIF-2B alpha/beta/delta subunits family. MtnA subfamily.

It carries out the reaction 5-(methylsulfanyl)-alpha-D-ribose 1-phosphate = 5-(methylsulfanyl)-D-ribulose 1-phosphate. It functions in the pathway amino-acid biosynthesis; L-methionine biosynthesis via salvage pathway; L-methionine from S-methyl-5-thio-alpha-D-ribose 1-phosphate: step 1/6. Functionally, catalyzes the interconversion of methylthioribose-1-phosphate (MTR-1-P) into methylthioribulose-1-phosphate (MTRu-1-P). The polypeptide is Methylthioribose-1-phosphate isomerase (Exiguobacterium sibiricum (strain DSM 17290 / CCUG 55495 / CIP 109462 / JCM 13490 / 255-15)).